The sequence spans 207 residues: Probable GTP-binding protein EngB (207 aa).

In terms of domain architecture, EngB-type G spans 25-202; the sequence is DVPEIAFVGR…ATLLWQWAHP (178 aa). Residues 33–40, 60–64, 82–85, 152–155, and 181–183 contribute to the GTP site; these read GRSNAGKS, GRTQH, DLPG, TKAD, and FSA. Mg(2+)-binding residues include S40 and T62.

This sequence belongs to the TRAFAC class TrmE-Era-EngA-EngB-Septin-like GTPase superfamily. EngB GTPase family. Mg(2+) is required as a cofactor.

In terms of biological role, necessary for normal cell division and for the maintenance of normal septation. The polypeptide is Probable GTP-binding protein EngB (Albidiferax ferrireducens (strain ATCC BAA-621 / DSM 15236 / T118) (Rhodoferax ferrireducens)).